A 522-amino-acid chain; its full sequence is 4-chlorobenzoate--CoA ligase (522 aa).

Residues T161–K169, D300–T305, and N410 each bind ATP.

The protein belongs to the ATP-dependent AMP-binding enzyme family. In terms of assembly, homodimer. Mg(2+) is required as a cofactor.

The catalysed reaction is 4-chlorobenzoate + ATP + CoA = 4-chlorobenzoyl-CoA + AMP + diphosphate. It functions in the pathway xenobiotic degradation; 4-chlorobenzoate degradation; 4-hydroxybenzoate from 4-chlorobenzoate: step 2/3. Its function is as follows. Catalyzes the formation of chlorobenzoyl-CoA via a 2 step reaction. First 4-chlorobenzoate is adenylated by ATP, followed by acyl transfer from the 4-chlorobenzoyl-AMP intermediate to CoA. Benzoate, 4-bromobenzoate, 4-iodobenzoate and 4-fluorobenzoate also act as substrates. Inactive towards 4-nitrobenzoate. The sequence is that of 4-chlorobenzoate--CoA ligase from Arthrobacter sp.